A 561-amino-acid chain; its full sequence is Solute carrier family 41 member 2 (561 aa).

The Extracellular segment spans residues 1-150 (MTANTGEPYK…KESSIAMALQ (150 aa)). The helical transmembrane segment at 151-171 (ILVPFLLAGFGTVSAGMVLDI) threads the bilayer. At 172-183 (VQHWDVFKNLTE) the chain is on the cytoplasmic side. A helical transmembrane segment spans residues 184–204 (VFILVPALLGLKGNLEMTLAS). Over 205 to 233 (RLSTAVNVGKMDSPIEKWNLIIGNLALKQ) the chain is Extracellular. The helical transmembrane segment at 234-254 (VQATVVGFLAAVFAVILGWIP) threads the bilayer. Residues 255–270 (DGKYQLDHAILLCSSS) are Cytoplasmic-facing. Residues 271-291 (VATAFIASLLQGIIMVGVIVG) form a helical membrane-spanning segment. Residues 292 to 301 (SKKTGINPDN) are Extracellular-facing. A helical transmembrane segment spans residues 302-322 (VATPIAASFGDLITLAILAWI). At 323–333 (SQGLYNCLGSY) the chain is on the cytoplasmic side. A helical membrane pass occupies residues 334–354 (AFVSPLVGVFFLAMTPIWIVI). Residues 355 to 364 (ASKHPATRTV) are Extracellular-facing. Residues 365 to 385 (LHSGWEPVITAMLISSIGGLI) form a helical membrane-spanning segment. Residues 386 to 394 (LDTTVSDPN) lie on the Cytoplasmic side of the membrane. A helical transmembrane segment spans residues 395 to 415 (LVGIVVYTPVINGIGGNLVAI). Over 416 to 457 (QASRISTYLHLYSIPGELPEDAKGCYHPCRTFCGTGVNNKSA) the chain is Extracellular. The chain crosses the membrane as a helical span at residues 458–478 (QVLLSLVIPGHLIFLYTIYLM). Residues 479–487 (KSGHTSLTP) are Cytoplasmic-facing. Residues 488–508 (IFVAVYLLAALLQVFALLWIA) traverse the membrane as a helical segment. Residues 509–531 (DWMVHHIWRKGKDPDSFSIPYLT) lie on the Extracellular side of the membrane. The chain crosses the membrane as a helical span at residues 532–552 (ALGDLLGTALLAISFHILWII). Residues 553–561 (GDRDGDVGD) lie on the Cytoplasmic side of the membrane.

This sequence belongs to the SLC41A transporter family.

It is found in the cell membrane. It catalyses the reaction Mg(2+)(in) = Mg(2+)(out). The enzyme catalyses Mn(2+)(in) = Mn(2+)(out). The catalysed reaction is Co(2+)(in) = Co(2+)(out). It carries out the reaction Ni(2+)(in) = Ni(2+)(out). It catalyses the reaction Fe(2+)(in) = Fe(2+)(out). In terms of biological role, acts as a plasma-membrane magnesium transporter. Can also mediate the transport of other divalent metal cations in an order of Ba(2+) &gt; Ni(2+) &gt; Co(2+) &gt; Fe(2+) &gt; Mn(2+). This is Solute carrier family 41 member 2 (slc41a2) from Xenopus laevis (African clawed frog).